We begin with the raw amino-acid sequence, 409 residues long: Tetracenomycin polyketide synthase ketoacyl synthase beta subunit (409 aa).

In terms of domain architecture, Ketosynthase family 3 (KS3) spans 4–407; it reads PAPVVVTGLG…GFNSALVVRR (404 aa).

This sequence belongs to the thiolase-like superfamily. Beta-ketoacyl-ACP synthases family. As to quaternary structure, the tetracenomycin polyketide synthase (TCM PKS) is composed of a ketosynthase complex (TcmKL), an acyl carrier protein (TcmM), a cyclase (TcmN) and a probable second cyclase (TcmJ). TcmK and TcmL form a heterodimeric complex.

The enzyme catalyses 10 malonyl-CoA + 8 H(+) = tetracenomycin F2 + 10 CO2 + 10 CoA + 2 H2O. Its pathway is antibiotic biosynthesis; tetracenomycin C biosynthesis. In terms of biological role, involved in the biosynthesis of tetracenomycin C (TCM C). Part of a type II polyketide synthase (PKS) that catalyzes the synthesis of tetracenomycin F2 (TCM F2), a precursor of TCM C, from malonyl-CoA. TcmK and TcmL form a heterodimeric alpha-beta complex that catalyzes the condensation reactions between the growing acyl-enzyme chain and the malonyl-CoA extender units. This is Tetracenomycin polyketide synthase ketoacyl synthase beta subunit from Streptomyces glaucescens.